A 165-amino-acid chain; its full sequence is Cytochrome c-type biogenesis protein CcmE (165 aa).

The Cytoplasmic portion of the chain corresponds to 1–29 (MSATAEDNARGAKPAGNFARTVSQRKRKR). A helical; Signal-anchor for type II membrane protein membrane pass occupies residues 30 to 50 (LFLIGGALAVLAVAVGLMLMA). Residues 51–165 (FSQDIRFFRT…LKEKGVWEGK (115 aa)) lie on the Periplasmic side of the membrane. Heme-binding residues include H143 and Y147.

It belongs to the CcmE/CycJ family.

The protein resides in the cell inner membrane. In terms of biological role, heme chaperone required for the biogenesis of c-type cytochromes. Transiently binds heme delivered by CcmC and transfers the heme to apo-cytochromes in a process facilitated by CcmF and CcmH. This is Cytochrome c-type biogenesis protein CcmE from Brucella anthropi (strain ATCC 49188 / DSM 6882 / CCUG 24695 / JCM 21032 / LMG 3331 / NBRC 15819 / NCTC 12168 / Alc 37) (Ochrobactrum anthropi).